Here is a 579-residue protein sequence, read N- to C-terminus: Alpha-longipinene synthase (579 aa).

Residues Asp332, Asp336, Asp476, and Asn484 each coordinate Mg(2+). The short motif at 332-336 is the DDXXD motif element; sequence DDLYD.

Belongs to the terpene synthase family. Tpsd subfamily. The cofactor is Mg(2+). Mn(2+) serves as cofactor.

The catalysed reaction is (2E,6E)-farnesyl diphosphate = alpha-longipinene + diphosphate. The protein operates within sesquiterpene biosynthesis. It functions in the pathway terpene metabolism; oleoresin biosynthesis. In terms of biological role, terpene synthase (TPS) involved in the biosynthesis of sesquiterpene natural products included in conifer oleoresin secretions and volatile emissions; these compounds contribute to biotic and abiotic stress defense against herbivores and pathogens. Catalyzes the conversion of (2E,6E)-farnesyl diphosphate (FPP) to alpha-longipinene. In Picea sitchensis (Sitka spruce), this protein is Alpha-longipinene synthase.